The primary structure comprises 462 residues: Integrator complex subunit 12 (462 aa).

A disordered region spans residues 42 to 132; the sequence is GIDSSYRPSQ…PETQSSPITV (91 aa). A compositionally biased stretch (polar residues) spans 59–86; it reads ISSTKNISIKQEPKISSSLPSGNNNGKV. A Glycyl lysine isopeptide (Lys-Gly) (interchain with G-Cter in SUMO2) cross-link involves residue lysine 68. The segment covering 88–124 has biased composition (basic and acidic residues); sequence TTEKVKKEAEKRPADKMKSDITEGVDIPKKPRLEKPE. Serine 128 is subject to Phosphoserine. Residues 159-215 form a PHD-type zinc finger; sequence GLACVVCRQMMVASGNQLVECQECHNLYHRDCHKPQVTDKEANDPRLVWYCARCTRQ. Lysine 254 is covalently cross-linked (Glycyl lysine isopeptide (Lys-Gly) (interchain with G-Cter in SUMO2)). Residues 301–328 are compositionally biased toward polar residues; sequence SSAGPSTAKLSSTTQNNTGKPATSSANQ. Residues 301–462 are disordered; it reads SSAGPSTAKL…KKAAQKKLKK (162 aa). Low complexity-rich tracts occupy residues 347–358 and 382–437; these read KIGSNNSTTPTV and VSKV…GPTS. Positions 449-462 are enriched in basic residues; the sequence is QMVKKKAAQKKLKK.

Belongs to the Integrator subunit 12 family. In terms of assembly, component of the Integrator complex, composed of core subunits INTS1, INTS2, INTS3, INTS4, INTS5, INTS6, INTS7, INTS8, INTS9/RC74, INTS10, INTS11/CPSF3L, INTS12, INTS13, INTS14 and INTS15. The core complex associates with protein phosphatase 2A subunits PPP2CA and PPP2R1A, to form the Integrator-PP2A (INTAC) complex. Post-translationally, dephosphorylated at Ser-128 by the PNUTS-PP1 complex, promoting RNA polymerase II transcription pause-release.

The protein localises to the nucleus. Its function is as follows. Component of the integrator complex, a multiprotein complex that terminates RNA polymerase II (Pol II) transcription in the promoter-proximal region of genes. The integrator complex provides a quality checkpoint during transcription elongation by driving premature transcription termination of transcripts that are unfavorably configured for transcriptional elongation: the complex terminates transcription by (1) catalyzing dephosphorylation of the C-terminal domain (CTD) of Pol II subunit POLR2A/RPB1 and SUPT5H/SPT5, (2) degrading the exiting nascent RNA transcript via endonuclease activity and (3) promoting the release of Pol II from bound DNA. The integrator complex is also involved in terminating the synthesis of non-coding Pol II transcripts, such as enhancer RNAs (eRNAs), small nuclear RNAs (snRNAs), telomerase RNAs and long non-coding RNAs (lncRNAs). Mediates recruitment of cytoplasmic dynein to the nuclear envelope, probably as component of the integrator complex. The chain is Integrator complex subunit 12 from Homo sapiens (Human).